The sequence spans 248 residues: DNA repair protein RecO (248 aa).

It belongs to the RecO family.

Functionally, involved in DNA repair and RecF pathway recombination. The polypeptide is DNA repair protein RecO (Thermoanaerobacter sp. (strain X514)).